Reading from the N-terminus, the 447-residue chain is Nuclear envelope integral membrane protein 2 (447 aa).

The signal sequence occupies residues 1 to 28; the sequence is MGPRRLPWARPGPALGLLLLALAGAVPA. Transmembrane regions (helical) follow at residues 144–164, 173–193, 202–222, 235–255, and 275–295; these read EMLDGKLLFLFAAGIFLFHFA, FFYLSGIILGVLALLVFVLLA, STFWILLSGCWMSSLYLIYCF, IYVLGYFVAVGTLSFATCYQH, and AFVFIYCGVNIPQVAYAIIAV. The interval 410-438 is disordered; it reads TRTESEQDETTSYIHEGDDENEDEIHEPI.

It belongs to the NEMP family.

The protein localises to the nucleus inner membrane. The polypeptide is Nuclear envelope integral membrane protein 2 (NEMP2) (Gallus gallus (Chicken)).